Consider the following 44-residue polypeptide: DNA-directed RNA polymerase subunit Rpo12 (44 aa).

Zn(2+) contacts are provided by cysteine 8, cysteine 22, and cysteine 25.

It belongs to the archaeal Rpo12/eukaryotic RPC10 RNA polymerase subunit family. As to quaternary structure, part of the RNA polymerase complex. The cofactor is Zn(2+).

The protein resides in the cytoplasm. The enzyme catalyses RNA(n) + a ribonucleoside 5'-triphosphate = RNA(n+1) + diphosphate. DNA-dependent RNA polymerase (RNAP) catalyzes the transcription of DNA into RNA using the four ribonucleoside triphosphates as substrates. The sequence is that of DNA-directed RNA polymerase subunit Rpo12 from Haloquadratum walsbyi (strain DSM 16790 / HBSQ001).